An 829-amino-acid polypeptide reads, in one-letter code: Periplasmic nitrate reductase (829 aa).

A signal peptide (tat-type signal) is located at residues 1-30; the sequence is MKMTRRAFVKANAAASAAAVAGITLPASAA. One can recognise a 4Fe-4S Mo/W bis-MGD-type domain in the interval 41 to 97; the sequence is ITWDKAPCRFCGTGCSVLVGTQNGKVVATQGDPEAPVNKGLNCIKGYFLSKIMYGQD. Residues C48, C51, C55, and C83 each coordinate [4Fe-4S] cluster. Mo-bis(molybdopterin guanine dinucleotide)-binding positions include K85, Q152, N177, C181, 214 to 221, 245 to 249, 264 to 266, M374, Q378, N484, 510 to 511, K533, D560, and 718 to 727; these read WGSNMAEM, STYYH, QSD, SD, and TGRVLEHWHT. Residue F794 participates in substrate binding. Residues N802 and K819 each contribute to the Mo-bis(molybdopterin guanine dinucleotide) site.

The protein belongs to the prokaryotic molybdopterin-containing oxidoreductase family. NasA/NapA/NarB subfamily. Component of the periplasmic nitrate reductase NapAB complex composed of NapA and NapB. Requires [4Fe-4S] cluster as cofactor. It depends on Mo-bis(molybdopterin guanine dinucleotide) as a cofactor. Predicted to be exported by the Tat system. The position of the signal peptide cleavage has not been experimentally proven.

Its subcellular location is the periplasm. It carries out the reaction 2 Fe(II)-[cytochrome] + nitrate + 2 H(+) = 2 Fe(III)-[cytochrome] + nitrite + H2O. Functionally, catalytic subunit of the periplasmic nitrate reductase complex NapAB. Receives electrons from NapB and catalyzes the reduction of nitrate to nitrite. The protein is Periplasmic nitrate reductase of Vibrio parahaemolyticus serotype O3:K6 (strain RIMD 2210633).